The primary structure comprises 229 residues: Phosphoglycolate phosphatase (229 aa).

The active-site Nucleophile is aspartate 18. 3 residues coordinate Mg(2+): aspartate 18, aspartate 20, and aspartate 176.

This sequence belongs to the HAD-like hydrolase superfamily. CbbY/CbbZ/Gph/YieH family. Mg(2+) serves as cofactor.

The enzyme catalyses 2-phosphoglycolate + H2O = glycolate + phosphate. It functions in the pathway organic acid metabolism; glycolate biosynthesis; glycolate from 2-phosphoglycolate: step 1/1. Specifically catalyzes the dephosphorylation of 2-phosphoglycolate. Is involved in the dissimilation of the intracellular 2-phosphoglycolate formed during the DNA repair of 3'-phosphoglycolate ends, a major class of DNA lesions induced by oxidative stress. The polypeptide is Phosphoglycolate phosphatase (Xylella fastidiosa (strain 9a5c)).